Reading from the N-terminus, the 309-residue chain is tRNA dimethylallyltransferase (309 aa).

ATP is bound at residue 9 to 16 (GPTAIGKT). 11–16 (TAIGKT) contacts substrate. Interaction with substrate tRNA regions lie at residues 34 to 37 (DSRQ) and 164 to 168 (QRMMR).

The protein belongs to the IPP transferase family. In terms of assembly, monomer. The cofactor is Mg(2+).

The enzyme catalyses adenosine(37) in tRNA + dimethylallyl diphosphate = N(6)-dimethylallyladenosine(37) in tRNA + diphosphate. In terms of biological role, catalyzes the transfer of a dimethylallyl group onto the adenine at position 37 in tRNAs that read codons beginning with uridine, leading to the formation of N6-(dimethylallyl)adenosine (i(6)A). The sequence is that of tRNA dimethylallyltransferase from Flavobacterium johnsoniae (strain ATCC 17061 / DSM 2064 / JCM 8514 / BCRC 14874 / CCUG 350202 / NBRC 14942 / NCIMB 11054 / UW101) (Cytophaga johnsonae).